A 329-amino-acid chain; its full sequence is Sialic acid-binding periplasmic protein SiaP (329 aa).

Positions 1-23 are cleaved as a signal peptide; the sequence is MMKLTKLFLATAISLGVSSAVLA. Residues asparagine 33, aspartate 72, glutamate 90, arginine 150, arginine 170, and asparagine 210 each contribute to the N-acetyl-beta-neuraminate site.

This sequence belongs to the bacterial solute-binding protein 7 family. The complex comprises the extracytoplasmic solute receptor protein SiaP, and the fused transmembrane protein SiaT.

The protein localises to the periplasm. Functionally, part of the tripartite ATP-independent periplasmic (TRAP) transport system SiaPT involved in the uptake of sialic acid (N-acetyl-beta-neuraminate). This protein specifically binds sialic acid with high affinity. N-Acetylneuraminate (sialic acid) can then be incorporated into the lipooligosaccharides (LOS) as a terminal non-reducing sugar, protecting the bacterium from complement-mediated killing by normal human serum. The protein is Sialic acid-binding periplasmic protein SiaP (siaP) of Haemophilus influenzae (strain ATCC 51907 / DSM 11121 / KW20 / Rd).